The sequence spans 256 residues: Enolase-phosphatase E1 (256 aa).

Mg(2+) contacts are provided by Asp14 and Glu16. Substrate contacts are provided by residues 142–143 (SS) and Lys176. Asp201 is a Mg(2+) binding site.

Belongs to the HAD-like hydrolase superfamily. MasA/MtnC family. As to quaternary structure, monomer. It depends on Mg(2+) as a cofactor.

The protein localises to the cytoplasm. It is found in the nucleus. The enzyme catalyses 5-methylsulfanyl-2,3-dioxopentyl phosphate + H2O = 1,2-dihydroxy-5-(methylsulfanyl)pent-1-en-3-one + phosphate. Its pathway is amino-acid biosynthesis; L-methionine biosynthesis via salvage pathway; L-methionine from S-methyl-5-thio-alpha-D-ribose 1-phosphate: step 3/6. It participates in amino-acid biosynthesis; L-methionine biosynthesis via salvage pathway; L-methionine from S-methyl-5-thio-alpha-D-ribose 1-phosphate: step 4/6. Bifunctional enzyme that catalyzes the enolization of 2,3-diketo-5-methylthiopentyl-1-phosphate (DK-MTP-1-P) into the intermediate 2-hydroxy-3-keto-5-methylthiopentenyl-1-phosphate (HK-MTPenyl-1-P), which is then dephosphorylated to form the acireductone 1,2-dihydroxy-3-keto-5-methylthiopentene (DHK-MTPene). The protein is Enolase-phosphatase E1 of Drosophila sechellia (Fruit fly).